A 247-amino-acid chain; its full sequence is Proteasome subunit alpha type-7 (247 aa).

The protein belongs to the peptidase T1A family. The 26S proteasome consists of a 20S proteasome core and two 19S regulatory subunits. The 20S proteasome core is composed of 28 subunits that are arranged in four stacked rings, resulting in a barrel-shaped structure. The two end rings are each formed by seven alpha subunits, and the two central rings are each formed by seven beta subunits. The catalytic chamber with the active sites is on the inside of the barrel.

The protein resides in the cytoplasm. The protein localises to the nucleus. Its function is as follows. The proteasome is a multicatalytic proteinase complex which is characterized by its ability to cleave peptides with Arg, Phe, Tyr, Leu, and Glu adjacent to the leaving group at neutral or slightly basic pH. The proteasome has an ATP-dependent proteolytic activity. This is Proteasome subunit alpha type-7 (PSA4) from Trypanosoma brucei brucei.